The following is a 663-amino-acid chain: CXXC-type zinc finger protein 1 (663 aa).

A PHD-type zinc finger spans residues 60 to 110 (QAYCICRSSDCSRFMIGCDGCEEWYHGDCIGITEKEAKHIKQYYCRRCKKE). The segment covering 134 to 161 (TSLNAPGVGPSGAAPAAAPVASATTSQQ) has biased composition (low complexity). Residues 134–183 (TSLNAPGVGPSGAAPAAAPVASATTSQQAPPPTTAAAKRKNSSAREPKMG) are disordered. The segment at 175–219 (SSAREPKMGKRCGTCEGCRRPNCNQCDACRVRVGHKPRCIFRTCV) adopts a CXXC-type zinc-finger fold. The Zn(2+) site is built by Cys-186, Cys-189, Cys-192, Cys-197, Cys-200, Cys-203, Cys-213, and Cys-218. The disordered stretch occupies residues 230–254 (QATQAGPSRKREKAAPKSRNVQVGP). Phosphoserine is present on Ser-258.

As to quaternary structure, component of the SET1 complex, composed at least of the catalytic subunit Set1, wds/WDR5, Wdr82, Rbbp5, ash2, Cfp1/CXXC1, hcf and Dpy-30L1.

It localises to the nucleus. Component of the SET1 complex that specifically di- and trimethylates 'Lys-4' of histone H3. Essential for Set1 association with chromatin and trimethylation of histone H3 at 'Lys-4' at transcription puffs. Additionally, is critical for general chromosomal association of Set1. The polypeptide is CXXC-type zinc finger protein 1 (Cfp1) (Drosophila melanogaster (Fruit fly)).